The primary structure comprises 316 residues: MKKLNIIFAGTPDFAATHLQALLNSEHNVIAVYTQPDKPAGRGKKLQASPVKQLAEVHHIPVYQPKSLRKEEAQAELQALNADVMVVVAYGLILPEAVLKAPKYGCLNVHGSLLPRWRGAAPIQRSIWAGDTETGVTIMQMDIGLDTGDMLHKVTTPILATETSASLYAKLAELAPPALLEVLNGLTSGQFKPEKQQDEQANYAEKLTKEEAKLDWNMTACQLERNIRAFNPAPMAYLTLMVNEVEERIKVYQAEVLPHQEKTVGTVLAVDKNGIQIATQQGVLNITQLQPAGKKPMSVQDFLNGRGDWFKVGSVL.

Position 112–115 (112–115 (SLLP)) interacts with (6S)-5,6,7,8-tetrahydrofolate.

It belongs to the Fmt family.

The catalysed reaction is L-methionyl-tRNA(fMet) + (6R)-10-formyltetrahydrofolate = N-formyl-L-methionyl-tRNA(fMet) + (6S)-5,6,7,8-tetrahydrofolate + H(+). In terms of biological role, attaches a formyl group to the free amino group of methionyl-tRNA(fMet). The formyl group appears to play a dual role in the initiator identity of N-formylmethionyl-tRNA by promoting its recognition by IF2 and preventing the misappropriation of this tRNA by the elongation apparatus. In Glaesserella parasuis serovar 5 (strain SH0165) (Haemophilus parasuis), this protein is Methionyl-tRNA formyltransferase.